We begin with the raw amino-acid sequence, 128 residues long: Azurin (128 aa).

One can recognise a Plastocyanin-like domain in the interval 1-128 (AECKTTIDST…SMMKGTVTLK (128 aa)). The cysteines at positions 3 and 26 are disulfide-linked. Residues His-46, Cys-112, His-117, and Met-121 each coordinate Cu cation.

Its subcellular location is the periplasm. Its function is as follows. Transfers electrons from cytochrome c551 to cytochrome oxidase. This is Azurin from Pseudomonas fluorescens biotype B.